The chain runs to 62 residues: Large ribosomal subunit protein bL28 (62 aa).

It belongs to the bacterial ribosomal protein bL28 family.

The chain is Large ribosomal subunit protein bL28 from Caldicellulosiruptor bescii (strain ATCC BAA-1888 / DSM 6725 / KCTC 15123 / Z-1320) (Anaerocellum thermophilum).